A 229-amino-acid polypeptide reads, in one-letter code: Heptaprenylglyceryl phosphate synthase (229 aa).

Lys-12 lines the sn-glycerol 1-phosphate pocket. Residues Asp-14 and Ser-40 each contribute to the Mg(2+) site. Sn-glycerol 1-phosphate is bound by residues 159–164 (YLEYSG), Gly-189, and 209–210 (GN).

The protein belongs to the GGGP/HepGP synthase family. Group I subfamily. Homodimer. It depends on Mg(2+) as a cofactor.

The enzyme catalyses sn-glycerol 1-phosphate + all-trans-heptaprenyl diphosphate = 3-heptaprenyl-sn-glycero-1-phosphate + diphosphate. The protein operates within membrane lipid metabolism; glycerophospholipid metabolism. In terms of biological role, prenyltransferase that catalyzes in vivo the transfer of the heptaprenyl moiety of heptaprenyl pyrophosphate (HepPP; 35 carbon atoms) to the C3 hydroxyl of sn-glycerol-1-phosphate (G1P), producing heptaprenylglyceryl phosphate (HepGP). This reaction is an ether-bond-formation step in the biosynthesis of archaea-type G1P-based membrane lipids found in Bacillales. In Bacillus anthracis (strain A0248), this protein is Heptaprenylglyceryl phosphate synthase.